The following is a 227-amino-acid chain: Transcriptional regulatory protein CusR (227 aa).

One can recognise a Response regulatory domain in the interval 2 to 116; that stretch reads KLLIVEDEKK…ELLARVRTLL (115 aa). Aspartate 51 is subject to 4-aspartylphosphate. The segment at residues 125–223 is a DNA-binding region (ompR/PhoB-type); that stretch reads ESQFQVADLM…VRGVGYMLEV (99 aa).

In terms of processing, phosphorylated by CusS.

The protein localises to the cytoplasm. Member of the two-component regulatory system CusS/CusR involved in response to copper and silver. The protein is Transcriptional regulatory protein CusR (cusR) of Escherichia coli O6:H1 (strain CFT073 / ATCC 700928 / UPEC).